Reading from the N-terminus, the 570-residue chain is Pyruvate decarboxylase (570 aa).

A propeptide spans 1-2 (MV) (removed in mature form). D33 and H120 together coordinate substrate. The thiamine pyrophosphate binding stretch occupies residues 394–476 (DSWFNGIQLK…MLINNRGYTI (83 aa)). Mg(2+) is bound by residues D444, N471, and G473. E477 contributes to the substrate binding site.

This sequence belongs to the TPP enzyme family. In terms of assembly, homomer. The cofactor is a metal cation. Thiamine diphosphate is required as a cofactor.

The protein resides in the cytoplasm. The enzyme catalyses a 2-oxocarboxylate + H(+) = an aldehyde + CO2. Its pathway is carbohydrate metabolism; pyruvate metabolism. This is Pyruvate decarboxylase (cfp) from Neurospora crassa (strain ATCC 24698 / 74-OR23-1A / CBS 708.71 / DSM 1257 / FGSC 987).